An 883-amino-acid chain; its full sequence is Probable pre-mRNA-splicing factor ATP-dependent RNA helicase DEAH8 (883 aa).

Residues 232–395 form the Helicase ATP-binding domain; the sequence is LKLIEENQVL…FDSARIYLIP (164 aa). ATP is bound at residue 245-252; that stretch reads GETGSGKT. The DEAH box signature appears at 342 to 345; it reads DEAH. Residues 416–589 form the Helicase C-terminal domain; the sequence is TVIRTVVQIH…SVVLTLKSLG (174 aa). The tract at residues 845-883 is disordered; sequence EDTRPKKTQRRIEEASTSKVDTNKKTRTSKVDTNKKSKR.

The protein belongs to the DEAD box helicase family. DEAH subfamily. PRP2 sub-subfamily. In terms of tissue distribution, predominantly expressed in flowers.

It carries out the reaction ATP + H2O = ADP + phosphate + H(+). May be involved in pre-mRNA splicing. In Arabidopsis thaliana (Mouse-ear cress), this protein is Probable pre-mRNA-splicing factor ATP-dependent RNA helicase DEAH8.